The sequence spans 324 residues: MDDNRSTHSSMFGDLSTEEVTSKIILTAIIVLFMAVLFVLILHLYAKLYWWRIDQLQQQQQQQQQEQEQEEDQSSIAPPVVTRRQRRRFIFVPGQDALSNTGLTSFELSSLPIVFFRQDSCKDGLECSICLSELVKGDKARLLPKCNHSFHVECIDMWFQSHSTCPICRNTVLGPEQASSKRVEQVPDNAENAGTTNNNHDALSQLSTSSPEFPTNVLVWGRQDQVSTGNTNVGTQEDGAAGNGASQSQEAVVLDISDSSSRNHNVSSSSSSMRFIVEEEEAKSPMTTRLRSLRRFLSRDKRVGCSNSSTSNSSSSNAVASVDP.

The chain crosses the membrane as a helical span at residues Ile24–Leu44. Residues Cys127 to Arg169 form an RING-type; atypical zinc finger. Disordered regions lie at residues Ser179 to Ser210, Val226 to Ser248, and Arg299 to Pro324. Polar residues-rich tracts occupy residues Asn192–Ser210 and Val226–Thr235. Positions Ser306–Pro324 are enriched in low complexity.

This sequence belongs to the RING-type zinc finger family. ATL subfamily.

The protein resides in the membrane. The catalysed reaction is S-ubiquitinyl-[E2 ubiquitin-conjugating enzyme]-L-cysteine + [acceptor protein]-L-lysine = [E2 ubiquitin-conjugating enzyme]-L-cysteine + N(6)-ubiquitinyl-[acceptor protein]-L-lysine.. It functions in the pathway protein modification; protein ubiquitination. In Arabidopsis thaliana (Mouse-ear cress), this protein is RING-H2 finger protein ATL3 (ATL3).